Consider the following 589-residue polypeptide: RNA-directed RNA polymerase subunit beta (589 aa).

The 133-residue stretch at 259-391 (RRAHEGSVTN…TNTKKTFSEG (133 aa)) folds into the RdRp catalytic domain. 3 residues coordinate Mg(2+): Asp-274, Asp-359, and Asp-360.

In terms of assembly, homodimer; the replicase complex can dimerize. Part of the viral RNA-dependent RNA polymerase complex, the other subunits are the host ribosomal protein S1, EF-Tu and EF-Ts. S1 is needed for the initiation of genomic RNA (+)-strand replication. Mg(2+) serves as cofactor.

It catalyses the reaction RNA(n) + a ribonucleoside 5'-triphosphate = RNA(n+1) + diphosphate. This is the catalytic subunit of the viral RNA-dependent RNA polymerase complex. This complex is involved in viral RNA replication that produces (+)-stranded genomes via a complementary, (-)-stranded intermediate. Binds RNA cooperatively with the host ribosomal protein S1. The sequence is that of RNA-directed RNA polymerase subunit beta from Escherichia coli (Bacteriophage Q-beta).